The following is a 726-amino-acid chain: Methionine--tRNA ligase (726 aa).

The 'HIGH' region signature appears at 12-22 (PYVNNIPHLGN). Residues Cys143, Cys146, Cys155, and Cys158 each contribute to the Zn(2+) site. Positions 330 to 334 (KFSKS) match the 'KMSKS' region motif. An ATP-binding site is contributed by Lys333. A tRNA-binding domain is found at 562 to 667 (FSEKVCLKVV…DNPIPGERII (106 aa)).

Belongs to the class-I aminoacyl-tRNA synthetase family. MetG type 1 subfamily. In terms of assembly, homodimer. Requires Zn(2+) as cofactor.

The protein localises to the cytoplasm. It carries out the reaction tRNA(Met) + L-methionine + ATP = L-methionyl-tRNA(Met) + AMP + diphosphate. In terms of biological role, is required not only for elongation of protein synthesis but also for the initiation of all mRNA translation through initiator tRNA(fMet) aminoacylation. The sequence is that of Methionine--tRNA ligase from Borrelia turicatae (strain 91E135).